Here is a 398-residue protein sequence, read N- to C-terminus: Trans-2-enoyl-CoA reductase [NADH] (398 aa).

NAD(+) contacts are provided by residues 47–52 (GASSGF), 74–75 (FE), 111–112 (DA), and 139–140 (LA). A substrate-binding site is contributed by Tyr-225. The active-site Proton donor is Tyr-235. Residues Lys-244 and 274–276 (IVT) contribute to the NAD(+) site.

Belongs to the TER reductase family. As to quaternary structure, monomer.

The catalysed reaction is a 2,3-saturated acyl-CoA + NAD(+) = a (2E)-enoyl-CoA + NADH + H(+). It functions in the pathway lipid metabolism; fatty acid biosynthesis. Functionally, involved in the fatty acid synthesis (FAS II). Catalyzes the reduction of a carbon-carbon double bond in an enoyl moiety that is covalently linked to a coenzyme A (CoA). The protein is Trans-2-enoyl-CoA reductase [NADH] of Clostridium beijerinckii (strain ATCC 51743 / NCIMB 8052) (Clostridium acetobutylicum).